A 560-amino-acid polypeptide reads, in one-letter code: MVTLSNVGADVEKNIVPEVNDASKRDSDNASADFQPGVKRVRAVASVWSKKTLWLTFALLYLVAFVDMLLVSVQSTLNPFITSSFEKHGLLASVSIVATILSGCSTLTLAKIVDVWGRIEGFLFMLLVVVVALIMKATCKNMEAYVAAHTLYWTGHIGMIYCVDVMLADMTTLRNRMIMFSINNTPTIASTFAGPKIADLFFSNLNFRWAFGAFAIMLVGVSLPVIVIMLFMERKSVKAGFLVKEKSGRSAWESIKYHLIEFDVVGIVLITASFALILLPFSIVVYAPKGWATGYIIAMEVVGVVCGAIFLAWERFLAPVQFLPFKYLKNPTIIGSCLLYGVMFASALLTITTAGYVLNSFSLSSAILAPGIGLYTGNFKWAAYAGIPFMLLGTALLIPFRQPNTSIGAVTITQVLVGIGTSFFSVCGQLAVMSVVSHQEVAVVLAIWGMFGSIGASVGLAVAGAMWNNILPSQLYRRLPEESKAMAAQIFGDMQLQMSYLDGTPERDAIVGAYADVQRKMVIAGVCMMPLVMASIVIWRNVNIKKQEEEEGSQTTGNIF.

An N-linked (GlcNAc...) asparagine glycan is attached at N29. 11 helical membrane passes run 53 to 73 (LWLT…LVSV), 90 to 110 (LLAS…LTLA), 115 to 135 (VWGR…ALIM), 146 to 166 (VAAH…VDVM), 177 to 194 (MIMF…TFAG), 211 to 231 (FGAF…IMLF), 264 to 284 (VVGI…FSIV), 291 to 311 (WATG…AIFL), 331 to 351 (PTII…LLTI), 354 to 374 (AGYV…GIGL), and 379 to 399 (FKWA…LLIP). N-linked (GlcNAc...) asparagine glycosylation occurs at N404. 3 consecutive transmembrane segments (helical) span residues 407-427 (IGAV…FSVC), 441-461 (VAVV…VGLA), and 522-542 (VIAG…WRNV).

It belongs to the major facilitator superfamily.

It is found in the membrane. Its function is as follows. Major facilitator transporter involved in siderophore transport. The polypeptide is MFS siderochrome iron transporter 1 (Ajellomyces capsulatus (Darling's disease fungus)).